Here is a 282-residue protein sequence, read N- to C-terminus: MLRGSTSVCRSLELVTQAARYASAATAAAPTGKRIKTFEIYRFNPEEPGAKPKLQKFDVDLDKCGTMVLDALIKIKNEVDPTLTFRRSCREGICGSCAMNIAGENTLACICNIDQNTSKTTKIYPLPHMFVIKDLVPDMNLFYAQYASIQPWLQKKTKINLGEKQQYQSIKEQEKLDGLYECILCACCSASCPSYWWNADKYLGPAVLMQAYRWIIDSRDDSAAERLARMQDGFSAFKCHTIMNCTKTCPKHLNPARAIGEIKMLLTKMKTKPAPLPTPANF.

A mitochondrion-targeting transit peptide spans 1–21; it reads MLRGSTSVCRSLELVTQAARY. Residues 39–129 form the 2Fe-2S ferredoxin-type domain; it reads EIYRFNPEEP…TTKIYPLPHM (91 aa). The [2Fe-2S] cluster site is built by C89, C94, C97, and C109. The region spanning 172 to 202 is the 4Fe-4S ferredoxin-type domain; it reads EQEKLDGLYECILCACCSASCPSYWWNADKY. [4Fe-4S] cluster-binding residues include C182, C185, and C188. Residue C192 participates in [3Fe-4S] cluster binding. An a rhodoquinol-binding site is contributed by W197. W197 serves as a coordination point for a ubiquinone. Residues C239 and C245 each contribute to the [3Fe-4S] cluster site. C249 serves as a coordination point for [4Fe-4S] cluster.

This sequence belongs to the succinate dehydrogenase/fumarate reductase iron-sulfur protein family. Component of the mitochondrial electron transport chain complex II composed of four subunits: a flavoprotein (Fp), an iron-sulfur protein (Ip), and a large cytochrome b (CybL) subunit and a small cytochrome b (CybS) subunit. There are 2 developmental stage-specific forms of complex II which have the Ip and CybL subunits in common. Complex II from the free-living larvae (aerobic environment) acts as a succinate dehydrogenase and is composed of the common subunit Ip and CybL and the stage specific subunits FpL and CybSL. Complex II from parasitic larvae and adults (anaerobic environment) acts as a fumarate reductase and is composed of the common subunit Ip and CybL and the stage specific subunits FpA and CybSA. Requires [2Fe-2S] cluster as cofactor. The cofactor is [3Fe-4S] cluster. It depends on [4Fe-4S] cluster as a cofactor. As to expression, expressed in adult muscles (at protein level).

It is found in the mitochondrion inner membrane. The catalysed reaction is a ubiquinone + succinate = a ubiquinol + fumarate. The enzyme catalyses a rhodoquinone + succinate = a rhodoquinol + fumarate. It functions in the pathway carbohydrate metabolism; tricarboxylic acid cycle; fumarate from succinate (eukaryal route): step 1/1. With respect to regulation, inhibited by the fungicide flutolanil. Its function is as follows. Iron-sulfur protein (Ip) subunit of the mitochondrial electron transport chain complex II which, together with the flavoprotein (Fp) subunit forms the catalytic core of the complex. During the free-living egg-larvae stages, which occur in an aerobic environment, complex II acts as a succinate dehydrogenase by transferring electrons from succinate to ubiquinone. During the parasitic larvae and adult stages, which occur in an anaerobic environment, complex II acts as a fumarate reductase by transferring electrons from rhodoquinol to fumarate. The chain is Succinate dehydrogenase [ubiquinone] iron-sulfur subunit, mitochondrial from Ascaris suum (Pig roundworm).